Reading from the N-terminus, the 194-residue chain is ATP-dependent Clp protease proteolytic subunit 1 (194 aa).

The active-site Nucleophile is the Ser99. His124 is an active-site residue.

The protein belongs to the peptidase S14 family. As to quaternary structure, fourteen ClpP subunits assemble into 2 heptameric rings which stack back to back to give a disk-like structure with a central cavity, resembling the structure of eukaryotic proteasomes.

The protein resides in the cytoplasm. It carries out the reaction Hydrolysis of proteins to small peptides in the presence of ATP and magnesium. alpha-casein is the usual test substrate. In the absence of ATP, only oligopeptides shorter than five residues are hydrolyzed (such as succinyl-Leu-Tyr-|-NHMec, and Leu-Tyr-Leu-|-Tyr-Trp, in which cleavage of the -Tyr-|-Leu- and -Tyr-|-Trp bonds also occurs).. Its function is as follows. Cleaves peptides in various proteins in a process that requires ATP hydrolysis. Has a chymotrypsin-like activity. Plays a major role in the degradation of misfolded proteins. The polypeptide is ATP-dependent Clp protease proteolytic subunit 1 (Borreliella burgdorferi (strain ATCC 35210 / DSM 4680 / CIP 102532 / B31) (Borrelia burgdorferi)).